We begin with the raw amino-acid sequence, 113 residues long: Histone H3-8 (113 aa).

The segment covering 1 to 17 (NTGAKAPRKHLANKAAR) has biased composition (basic residues). The tract at residues 1-31 (NTGAKAPRKHLANKAARKTAAPANAGIKKPH) is disordered.

It belongs to the histone H3 family. As to quaternary structure, the nucleosome is a histone octamer containing two molecules each of H2A, H2B, H3 and H4 assembled in one H3-H4 heterotetramer and two H2A-H2B heterodimers. The octamer wraps approximately 147 bp of DNA.

The protein localises to the nucleus. Its subcellular location is the chromosome. In terms of biological role, core component of nucleosome. Nucleosomes wrap and compact DNA into chromatin, limiting DNA accessibility to the cellular machineries which require DNA as a template. Histones thereby play a central role in transcription regulation, DNA repair, DNA replication and chromosomal stability. DNA accessibility is regulated via a complex set of post-translational modifications of histones, also called histone code, and nucleosome remodeling. In Stylonychia lemnae (Ciliate), this protein is Histone H3-8 (H3-8).